Here is a 532-residue protein sequence, read N- to C-terminus: CTP synthase (532 aa).

The tract at residues 1–267 (MTKYIFVTGG…DDIVLEHLQL (267 aa)) is amidoligase domain. Residue Ser-13 participates in CTP binding. Ser-13 lines the UTP pocket. Position 14–19 (14–19 (SIGKGI)) interacts with ATP. An L-glutamine-binding site is contributed by Tyr-54. Residue Asp-71 participates in ATP binding. Residues Asp-71 and Glu-141 each contribute to the Mg(2+) site. CTP-binding positions include 148 to 150 (DIE), 188 to 193 (KTKPTQ), and Lys-224. UTP-binding positions include 188-193 (KTKPTQ) and Lys-224. Positions 292-532 (RIGLVGKYVS…DFVGAALKNK (241 aa)) constitute a Glutamine amidotransferase type-1 domain. Position 354 (Gly-354) interacts with L-glutamine. The active-site Nucleophile; for glutamine hydrolysis is Cys-381. Residues 382–385 (LGMQ), Glu-405, and Arg-462 each bind L-glutamine. Catalysis depends on residues His-507 and Glu-509.

It belongs to the CTP synthase family. In terms of assembly, homotetramer.

It carries out the reaction UTP + L-glutamine + ATP + H2O = CTP + L-glutamate + ADP + phosphate + 2 H(+). It catalyses the reaction L-glutamine + H2O = L-glutamate + NH4(+). The catalysed reaction is UTP + NH4(+) + ATP = CTP + ADP + phosphate + 2 H(+). It participates in pyrimidine metabolism; CTP biosynthesis via de novo pathway; CTP from UDP: step 2/2. With respect to regulation, allosterically activated by GTP, when glutamine is the substrate; GTP has no effect on the reaction when ammonia is the substrate. The allosteric effector GTP functions by stabilizing the protein conformation that binds the tetrahedral intermediate(s) formed during glutamine hydrolysis. Inhibited by the product CTP, via allosteric rather than competitive inhibition. Catalyzes the ATP-dependent amination of UTP to CTP with either L-glutamine or ammonia as the source of nitrogen. Regulates intracellular CTP levels through interactions with the four ribonucleotide triphosphates. The polypeptide is CTP synthase (Listeria monocytogenes serovar 1/2a (strain ATCC BAA-679 / EGD-e)).